The sequence spans 590 residues: 4-oxocyclohex-2-ene-1-carboxylate 5-dehydrogenase (590 aa).

It belongs to the FAD-dependent oxidoreductase 2 family. Forms multimers. Requires FAD as cofactor.

The enzyme catalyses 4-oxocyclohex-2-ene-1-carboxylate + NAD(+) = 4-oxocyclohexa-2,5-diene-1-carboxylate + NADH + H(+). Desaturase involved in a cyclohexanecarboxylate (CHCA) degradation pathway. Probably catalyzes the conversion of 4-oxocyclohexenecarboxylate to 4-oxocyclohex-2,5-dienecarboxylate, which is spontaneously isomerized to 4-hydroxybenzoate (4-HBA). The sequence is that of 4-oxocyclohex-2-ene-1-carboxylate 5-dehydrogenase from Sinomonas cyclohexanicum (Corynebacterium cyclohexanicum).